Here is a 109-residue protein sequence, read N- to C-terminus: uncharacterized protein (109 aa).

This is an uncharacterized protein from Bos taurus (Bovine).